The sequence spans 333 residues: 5-formaminoimidazole-4-carboxamide-1-(beta)-D-ribofuranosyl 5'-monophosphate synthetase (333 aa).

5-amino-1-(5-phospho-beta-D-ribosyl)imidazole-4-carboxamide is bound by residues His10 and Ser70. Positions 91–324 (KEVLKWESDR…IAREIKIAIE (234 aa)) constitute an ATP-grasp domain. Residues 121–181 (PDDI…VPIY) and Glu203 contribute to the ATP site. 5-amino-1-(5-phospho-beta-D-ribosyl)imidazole-4-carboxamide is bound at residue Asn231. Mg(2+)-binding residues include Glu269 and Glu282.

The protein belongs to the phosphohexose mutase family. The cofactor is Mg(2+). Mn(2+) serves as cofactor.

The catalysed reaction is 5-amino-1-(5-phospho-beta-D-ribosyl)imidazole-4-carboxamide + formate + ATP = 5-formamido-1-(5-phospho-D-ribosyl)imidazole-4-carboxamide + ADP + phosphate. Its pathway is purine metabolism; IMP biosynthesis via de novo pathway; 5-formamido-1-(5-phospho-D-ribosyl)imidazole-4-carboxamide from 5-amino-1-(5-phospho-D-ribosyl)imidazole-4-carboxamide (formate route): step 1/1. In terms of biological role, catalyzes the ATP- and formate-dependent formylation of 5-aminoimidazole-4-carboxamide-1-beta-d-ribofuranosyl 5'-monophosphate (AICAR) to 5-formaminoimidazole-4-carboxamide-1-beta-d-ribofuranosyl 5'-monophosphate (FAICAR) in the absence of folates. The polypeptide is 5-formaminoimidazole-4-carboxamide-1-(beta)-D-ribofuranosyl 5'-monophosphate synthetase (Pyrococcus horikoshii (strain ATCC 700860 / DSM 12428 / JCM 9974 / NBRC 100139 / OT-3)).